A 78-amino-acid polypeptide reads, in one-letter code: Large ribosomal subunit protein bL28 (78 aa).

Belongs to the bacterial ribosomal protein bL28 family.

This is Large ribosomal subunit protein bL28 from Clavibacter michiganensis subsp. michiganensis (strain NCPPB 382).